Reading from the N-terminus, the 197-residue chain is Ribonuclease HII (197 aa).

Positions 9 to 197 constitute an RNase H type-2 domain; it reads ELIAGVDEVG…APVKKALEQF (189 aa). A divalent metal cation is bound by residues aspartate 15, glutamate 16, and aspartate 107.

It belongs to the RNase HII family. Requires Mn(2+) as cofactor. The cofactor is Mg(2+).

It is found in the cytoplasm. It catalyses the reaction Endonucleolytic cleavage to 5'-phosphomonoester.. Its function is as follows. Endonuclease that specifically degrades the RNA of RNA-DNA hybrids. In Haemophilus influenzae (strain 86-028NP), this protein is Ribonuclease HII.